The sequence spans 20 residues: DCCYGRVNGCNPKMADKNYE.

Belongs to the phospholipase A2 family. Group II subfamily. D49 sub-subfamily. As to quaternary structure, heterodimer of an acidic subunit (CbIalpha or CbIbeta) and a basic subunit (CbII). The acidic subunit (CbI) is non-toxic, and increases the toxicity of the basic subunit (CbII). The cofactor is Ca(2+). In terms of processing, contains 7 disulfide bonds. In terms of tissue distribution, expressed by the venom gland.

The protein resides in the secreted. It carries out the reaction a 1,2-diacyl-sn-glycero-3-phosphocholine + H2O = a 1-acyl-sn-glycero-3-phosphocholine + a fatty acid + H(+). Functionally, heterodimer: presynaptic neurotoxin. Monomer: Snake venom phospholipase A2 (PLA2) is inactive towards micellar phosphatidylcholine but is weakly active towards non-micellar dithiolecithin. PLA2 catalyzes the calcium-dependent hydrolysis of the 2-acyl groups in 3-sn-phosphoglycerides. The chain is Acidic phospholipase A2 CbIbeta from Pseudocerastes fieldi (Field's horned viper).